We begin with the raw amino-acid sequence, 519 residues long: Glutamate--cysteine ligase (519 aa).

It belongs to the glutamate--cysteine ligase type 1 family. Type 1 subfamily.

The catalysed reaction is L-cysteine + L-glutamate + ATP = gamma-L-glutamyl-L-cysteine + ADP + phosphate + H(+). Its pathway is sulfur metabolism; glutathione biosynthesis; glutathione from L-cysteine and L-glutamate: step 1/2. This is Glutamate--cysteine ligase from Edwardsiella ictaluri (strain 93-146).